A 1129-amino-acid polypeptide reads, in one-letter code: Nuclear pore complex protein 15 (1129 aa).

Belongs to the nucleoporin Nup133 family.

It localises to the nucleus envelope. The protein resides in the nucleus. Its subcellular location is the nuclear pore complex. Functionally, important for early nematode development. This Caenorhabditis elegans protein is Nuclear pore complex protein 15.